Here is a 230-residue protein sequence, read N- to C-terminus: Orotidine 5'-phosphate decarboxylase (230 aa).

Residues aspartate 10, lysine 32, 59–68, threonine 119, arginine 180, glutamine 189, glycine 209, and arginine 210 contribute to the substrate site; that span reads DLKYHDIPNT. Catalysis depends on lysine 61, which acts as the Proton donor.

It belongs to the OMP decarboxylase family. Type 1 subfamily. Homodimer.

The enzyme catalyses orotidine 5'-phosphate + H(+) = UMP + CO2. Its pathway is pyrimidine metabolism; UMP biosynthesis via de novo pathway; UMP from orotate: step 2/2. Its function is as follows. Catalyzes the decarboxylation of orotidine 5'-monophosphate (OMP) to uridine 5'-monophosphate (UMP). The protein is Orotidine 5'-phosphate decarboxylase of Haemophilus ducreyi (strain 35000HP / ATCC 700724).